We begin with the raw amino-acid sequence, 613 residues long: Zinc metalloproteinase-disintegrin-like MTP8 (613 aa).

An N-terminal signal peptide occupies residues M1–P20. Residues I21–L191 constitute a propeptide that is removed on maturation. In terms of domain architecture, Peptidase M12B spans K205–P401. E208 is a Ca(2+) binding site. N282 carries an N-linked (GlcNAc...) asparagine glycan. D292 is a binding site for Ca(2+). Cystine bridges form between C316–C396, C356–C380, and C358–C363. 3 residues coordinate Zn(2+): H341, H345, and H351. 7 residues coordinate Ca(2+): C396, N399, N414, F416, E418, E421, and D424. A Disintegrin domain is found at P409–N495. Intrachain disulfides connect C412–C441, C423–C436, C425–C431, C435–C458, C449–C455, C454–C480, C467–C487, C474–C506, C499–C511, C518–C568, C533–C575, C543–C577, C546–C556, C563–C601, and C595–C606. N-linked (GlcNAc...) asparagine glycosylation is present at N437. Residues D473–D475 carry the D/ECD-tripeptide motif. Ca(2+)-binding residues include D475, L476, E478, and D490. N-linked (GlcNAc...) asparagine glycosylation is found at N550 and N572.

This sequence belongs to the venom metalloproteinase (M12B) family. P-III subfamily. As to quaternary structure, monomer. Requires Zn(2+) as cofactor. As to expression, expressed by the venom gland.

The protein resides in the secreted. In terms of biological role, snake venom zinc metalloproteinase that may impair hemostasis in the prey. This is Zinc metalloproteinase-disintegrin-like MTP8 from Drysdalia coronoides (White-lipped snake).